The following is a 236-amino-acid chain: MKSLSFLNHEFEAFPSPELALTDPNGLLAIGGDLRPDRLLTAYYHGIFPWFNAEDPILWWSPDPRAIFIPGQVNISTSLRKYLKKQPWRFTINHAFTDVMAGCAQPRRKQAGTWITHEIQMAYRELHHNGHAHSIEVWQGERLIGGLYGLAIGQVFCGESMFHRETNASKAAMAVLQQHLIKMNFKLIDAQVMNPHLESLGAKALKRADFIQLLTQFRDDAVNPAAWIPSEVFLEL.

It belongs to the L/F-transferase family.

It localises to the cytoplasm. It carries out the reaction N-terminal L-lysyl-[protein] + L-leucyl-tRNA(Leu) = N-terminal L-leucyl-L-lysyl-[protein] + tRNA(Leu) + H(+). It catalyses the reaction N-terminal L-arginyl-[protein] + L-leucyl-tRNA(Leu) = N-terminal L-leucyl-L-arginyl-[protein] + tRNA(Leu) + H(+). The enzyme catalyses L-phenylalanyl-tRNA(Phe) + an N-terminal L-alpha-aminoacyl-[protein] = an N-terminal L-phenylalanyl-L-alpha-aminoacyl-[protein] + tRNA(Phe). In terms of biological role, functions in the N-end rule pathway of protein degradation where it conjugates Leu, Phe and, less efficiently, Met from aminoacyl-tRNAs to the N-termini of proteins containing an N-terminal arginine or lysine. The polypeptide is Leucyl/phenylalanyl-tRNA--protein transferase (Shewanella oneidensis (strain ATCC 700550 / JCM 31522 / CIP 106686 / LMG 19005 / NCIMB 14063 / MR-1)).